The sequence spans 1003 residues: Pumilio homolog 4 (1003 aa).

The segment at 38–65 is disordered; sequence QHRNQQSFGRERERDIDVHRSGSAPPTV. The span at 46 to 57 shows a compositional bias: basic and acidic residues; the sequence is GRERERDIDVHR. S225 carries the post-translational modification Phosphoserine. Over residues 285-300 the composition is skewed to polar residues; that stretch reads KNSPNTMLGSTMSSPV. A disordered region spans residues 285 to 328; sequence KNSPNTMLGSTMSSPVPRNRTPDSHLVGRSTASGLPPIGTRVGP. T305 carries the phosphothreonine modification. The region spanning 644-984 is the PUM-HD domain; the sequence is AEASLLEGFK…HIVARVEKLI (341 aa). 8 Pumilio repeats span residues 664–699, 700–735, 736–771, 772–807, 808–843, 845–880, 881–916, and 917–958; these read EIVG…AIFP, EILP…ELAE, QVTG…RMVK, ELDG…FIIS, SFYG…RIIM, EIMD…EIIN, KLAG…VLVN, and EMLG…LILS.

The protein localises to the cytoplasm. Sequence-specific RNA-binding protein that regulates translation and mRNA stability by binding the 3'-UTR of target mRNAs. Binds the APUM-binding elements (APBEs) in the 3'-UTR mRNA sequence of CLV1, PNH, WUS and FAS2. This chain is Pumilio homolog 4 (APUM4), found in Arabidopsis thaliana (Mouse-ear cress).